A 263-amino-acid chain; its full sequence is Kallikrein 1-related peptidase b27 (263 aa).

The N-terminal stretch at 1–17 (MRFLILFLALSLGGIDA) is a signal peptide. Residues 18 to 24 (APPVQSR) constitute a propeptide, activation peptide. The region spanning 25 to 260 (IIGGFKCKKN…FTSWIKDTMA (236 aa)) is the Peptidase S1 domain. Intrachain disulfides connect Cys-31–Cys-175, Cys-50–Cys-66, Cys-154–Cys-221, Cys-186–Cys-200, and Cys-211–Cys-236. Residue His-65 is the Charge relay system of the active site. Asn-69 and Asn-105 each carry an N-linked (GlcNAc...) asparagine glycan. The Charge relay system role is filled by Asp-122. Ser-215 (charge relay system) is an active-site residue.

This sequence belongs to the peptidase S1 family. Kallikrein subfamily. Expressed in testis and submaxillary gland. Not expressed in heart, brain, spleen, lung, liver, muscle, kidney and ovary. In the testis, expression localized specifically to Leydig cells in the interstitial tissues.

Strongly inhibited by protease inhibitors diisopropyl fluorophosphate, phenylmethanesulfonyl fluoride and SBTI. Serine protease with chymotrypsin-like cleavage specificity. Shows activity towards casein, gelatin, IGFBP3 and fibronectin but not towards laminin or collagens I and IV. Does not hydrolyze kininogin to release Lys-bradykinin. The polypeptide is Kallikrein 1-related peptidase b27 (Klk1b27) (Mus musculus (Mouse)).